Consider the following 640-residue polypeptide: 1,4-alpha-glucan branching enzyme GlgB (640 aa).

D318 (nucleophile) is an active-site residue. The active-site Proton donor is E371.

Belongs to the glycosyl hydrolase 13 family. GlgB subfamily. In terms of assembly, monomer.

It catalyses the reaction Transfers a segment of a (1-&gt;4)-alpha-D-glucan chain to a primary hydroxy group in a similar glucan chain.. It functions in the pathway glycan biosynthesis; glycogen biosynthesis. Catalyzes the formation of the alpha-1,6-glucosidic linkages in glycogen by scission of a 1,4-alpha-linked oligosaccharide from growing alpha-1,4-glucan chains and the subsequent attachment of the oligosaccharide to the alpha-1,6 position. This Francisella tularensis subsp. holarctica (strain LVS) protein is 1,4-alpha-glucan branching enzyme GlgB.